Reading from the N-terminus, the 395-residue chain is Demethylmacrocin O-methyltransferase (395 aa).

The enzyme catalyses demethylmacrocin + S-adenosyl-L-methionine = macrocin + S-adenosyl-L-homocysteine + H(+). Its pathway is antibiotic biosynthesis; tylosin biosynthesis. Its function is as follows. O-methyltransferase that catalyzes the conversion of demethylmacrocin to macrocin, the penultimate step of tylosin antibiotic biosynthesis. Also able to mediate the conversion of demethyllactenocin to lactenocin. The sequence is that of Demethylmacrocin O-methyltransferase (tylE) from Streptomyces fradiae (Streptomyces roseoflavus).